The following is a 44-amino-acid chain: NKPSLSIVNPLDVLRQRLLLEIARRQMKENTRQVELNRAILKNV.

V44 is subject to Valine amide.

It localises to the secreted. Its function is as follows. Regulation of fluid secretion. Stimulates primary urine secretion by Malpighian tubules and causes a dose-dependent stimulation of cAMP levels in the tubules. May act as clearance peptide in that it may remove metabolic waste from the hemolymph. The polypeptide is Diuretic hormone (Stomoxys calcitrans (Stable fly)).